A 329-amino-acid polypeptide reads, in one-letter code: Ceramide synthase hyl-2 (329 aa).

N-linked (GlcNAc...) asparagine glycosylation is present at Asn-22. The next 7 helical transmembrane spans lie at 41 to 61, 95 to 115, 134 to 154, 162 to 182, 187 to 207, 221 to 241, and 270 to 290; these read VLTG…IFVP, ALYY…ESHL, VAWY…GILF, FWQM…SWTM, VGTL…VGKI, FAGV…FWII, and FIML…YILF. The region spanning 86-298 is the TLC domain; that stretch reads SRMAECAMRA…LFKIAYDTIQ (213 aa).

This sequence belongs to the sphingosine N-acyltransferase family. As to expression, strong expression in the gut, the posterior bulb of the pharynx, the hypoderm, and unidentified cells of the head and the tail.

It is found in the membrane. The enzyme catalyses a very long-chain fatty acyl-CoA + a sphingoid base = an N-(very-long-chain fatty acyl)-sphingoid base + CoA + H(+). It carries out the reaction a fatty acyl-CoA + sphinganine = an N-acylsphinganine + CoA + H(+). It catalyses the reaction docosanoyl-CoA + sphinganine = N-docosanoylsphinganine + CoA + H(+). The catalysed reaction is sphinganine + tetradecanoyl-CoA = N-(tetradecanoyl)-sphinganine + CoA + H(+). The enzyme catalyses eicosanoyl-CoA + sphinganine = N-eicosanoylsphinganine + CoA + H(+). It carries out the reaction 15-methylhexadecasphinganine + a fatty acyl-CoA = an N-acyl-15-methylhexadecasphinganine + CoA + H(+). The protein operates within lipid metabolism; sphingolipid metabolism. Catalyzes the acylation of sphingoid bases to form ceramides, which are key players in cell signaling events such as tolerances to heat, oxidation, and ultraviolet stress. C.elegans contain specific sphingoid bases, which are unique or different in structure compared to the sphingoid bases found in other animals. Two examples of these distinctive compounds are: 15-methylhexadecasphinganine and 15-methylhexadecasphing-4-enine. Exhibits substrate preference for long and very long fatty acyl-coA chains (C20-23). Required for adaptation of the nematode to anoxia. Anoxia tolerance may require one or more of the ceramide species that are either specifically or preferentially synthesized by HYL-2, and seems to be affected by a pathway that is parallel to that involving daf-2. The protein is Ceramide synthase hyl-2 (hyl-2) of Caenorhabditis elegans.